A 161-amino-acid polypeptide reads, in one-letter code: MTGAVCPGSFDPVTLGHVDIFERAAAQFDEVVVAILVNPAKTGMFDLDERIAMVKESTTHLPNLRVQVGHGLVVDFVRSCGMTAIVKGLRTGTDFEYELQMAQMNKHIAGVDTFFVATAPRYSFVSSSLAKEVAMLGGDVSELLPEPVNRRLRDRLNTERT.

Ser9 serves as a coordination point for substrate. ATP is bound by residues 9-10 (SF) and His17. Positions 41, 73, and 87 each coordinate substrate. Residues 88-90 (GLR), Glu98, and 122-128 (YSFVSSS) each bind ATP.

The protein belongs to the bacterial CoaD family. As to quaternary structure, homohexamer. Mg(2+) is required as a cofactor.

It is found in the cytoplasm. It carries out the reaction (R)-4'-phosphopantetheine + ATP + H(+) = 3'-dephospho-CoA + diphosphate. Its pathway is cofactor biosynthesis; coenzyme A biosynthesis; CoA from (R)-pantothenate: step 4/5. In terms of biological role, reversibly transfers an adenylyl group from ATP to 4'-phosphopantetheine, yielding dephospho-CoA (dPCoA) and pyrophosphate. The chain is Phosphopantetheine adenylyltransferase from Mycobacterium bovis (strain ATCC BAA-935 / AF2122/97).